The following is a 431-amino-acid chain: MTATVVIGSQWGDEGKGKIIDFLGQSADVTVRYSGGDNAGHSLVVNDQKLALRLIPSGILAPNSICIIGNGTVINPATLLDEIKELNGVGVNTDHLKISDRAHIVFPYHILQDQQQERDRSKNGEKIGTTNKGIGPAYMDKMQRIGIRAIDLLDNETLEEKIAFNLEQKKRILDEDLWNQLPSLKELTAQYIEYGEILKDYITDTSYLIHTNLNDNKRVLFEGAQGTMLDIDHGTYPFVTSSNPTAGGAATGAGIGVTKIKHVIGVCKSYVSRVGEGPFPTEQINEVGDRIREIAHEYGTVTKRPRRIGWFDGVLMKYVSEVNGLTDLVVNCLDVLSGFKELKICTGYQTDHGVIKYYPASEKELKNSTPIYETLPGWDEDLTQMTTYEELPANAKNYLKKIEEITGVPVSAFSIGPDREQTIVLNDMWSD.

Residues 12–18 (GDEGKGK) and 40–42 (GHS) each bind GTP. Residue aspartate 13 is the Proton acceptor of the active site. Mg(2+) is bound by residues aspartate 13 and glycine 40. IMP is bound by residues 13–16 (DEGK) and 38–41 (NAGH). Histidine 41 serves as the catalytic Proton donor. A disordered region spans residues 114 to 133 (QQQERDRSKNGEKIGTTNKG). A compositionally biased stretch (basic and acidic residues) spans 115 to 125 (QQERDRSKNGE). IMP contacts are provided by threonine 130, arginine 144, glutamine 225, threonine 240, and arginine 304. 300 to 306 (TVTKRPR) is a substrate binding site. Residues arginine 306, 332–334 (CLD), and 414–416 (SIG) each bind GTP.

The protein belongs to the adenylosuccinate synthetase family. As to quaternary structure, homodimer. The cofactor is Mg(2+).

It localises to the cytoplasm. The enzyme catalyses IMP + L-aspartate + GTP = N(6)-(1,2-dicarboxyethyl)-AMP + GDP + phosphate + 2 H(+). It participates in purine metabolism; AMP biosynthesis via de novo pathway; AMP from IMP: step 1/2. Plays an important role in the de novo pathway of purine nucleotide biosynthesis. Catalyzes the first committed step in the biosynthesis of AMP from IMP. The polypeptide is Adenylosuccinate synthetase (Pediococcus pentosaceus (strain ATCC 25745 / CCUG 21536 / LMG 10740 / 183-1w)).